A 426-amino-acid polypeptide reads, in one-letter code: Probable imidazolonepropionase (426 aa).

4-imidazolone-5-propanoate is bound by residues Tyr-159 and His-192. Residue Tyr-159 coordinates N-formimidoyl-L-glutamate. His-260 contributes to the Fe(3+) binding site. Residue His-260 coordinates Zn(2+). Glu-263 contacts 4-imidazolone-5-propanoate. Asp-334 is a Fe(3+) binding site. Position 334 (Asp-334) interacts with Zn(2+). Asn-336 is an N-formimidoyl-L-glutamate binding site.

It belongs to the metallo-dependent hydrolases superfamily. HutI family. Requires Zn(2+) as cofactor. The cofactor is Fe(3+).

It catalyses the reaction 4-imidazolone-5-propanoate + H2O = N-formimidoyl-L-glutamate. It functions in the pathway amino-acid degradation; L-histidine degradation into L-glutamate; N-formimidoyl-L-glutamate from L-histidine: step 3/3. The chain is Probable imidazolonepropionase (AMDHD1) from Homo sapiens (Human).